Consider the following 237-residue polypeptide: Carbohydrate deacetylase (237 aa).

The Mg(2+) site is built by histidine 59 and histidine 125.

Belongs to the YdjC deacetylase family. It depends on Mg(2+) as a cofactor.

Functionally, probably catalyzes the deacetylation of acetylated carbohydrates an important step in the degradation of oligosaccharides. This is Carbohydrate deacetylase from Halalkalibacterium halodurans (strain ATCC BAA-125 / DSM 18197 / FERM 7344 / JCM 9153 / C-125) (Bacillus halodurans).